The sequence spans 486 residues: Cobyric acid synthase (486 aa).

Residues Met-248–Ala-439 form the GATase cobBQ-type domain. The Nucleophile role is filled by Cys-329. His-431 is an active-site residue.

It belongs to the CobB/CobQ family. CobQ subfamily.

It functions in the pathway cofactor biosynthesis; adenosylcobalamin biosynthesis. Functionally, catalyzes amidations at positions B, D, E, and G on adenosylcobyrinic A,C-diamide. NH(2) groups are provided by glutamine, and one molecule of ATP is hydrogenolyzed for each amidation. The sequence is that of Cobyric acid synthase from Paraburkholderia phytofirmans (strain DSM 17436 / LMG 22146 / PsJN) (Burkholderia phytofirmans).